The sequence spans 413 residues: Multifunctional CCA protein (413 aa).

ATP-binding residues include Gly8 and Arg11. CTP is bound by residues Gly8 and Arg11. Residues Asp21 and Asp23 each coordinate Mg(2+). ATP-binding residues include Arg91, Arg137, and Arg140. Arg91, Arg137, and Arg140 together coordinate CTP. One can recognise an HD domain in the interval 228–329 (TGLHTLMTVT…VKLFDSIDAW (102 aa)).

This sequence belongs to the tRNA nucleotidyltransferase/poly(A) polymerase family. Bacterial CCA-adding enzyme type 1 subfamily. As to quaternary structure, monomer. Can also form homodimers and oligomers. It depends on Mg(2+) as a cofactor. Ni(2+) is required as a cofactor.

The enzyme catalyses a tRNA precursor + 2 CTP + ATP = a tRNA with a 3' CCA end + 3 diphosphate. The catalysed reaction is a tRNA with a 3' CCA end + 2 CTP + ATP = a tRNA with a 3' CCACCA end + 3 diphosphate. Functionally, catalyzes the addition and repair of the essential 3'-terminal CCA sequence in tRNAs without using a nucleic acid template. Adds these three nucleotides in the order of C, C, and A to the tRNA nucleotide-73, using CTP and ATP as substrates and producing inorganic pyrophosphate. tRNA 3'-terminal CCA addition is required both for tRNA processing and repair. Also involved in tRNA surveillance by mediating tandem CCA addition to generate a CCACCA at the 3' terminus of unstable tRNAs. While stable tRNAs receive only 3'-terminal CCA, unstable tRNAs are marked with CCACCA and rapidly degraded. This chain is Multifunctional CCA protein, found in Klebsiella pneumoniae subsp. pneumoniae (strain ATCC 700721 / MGH 78578).